The following is a 487-amino-acid chain: MKAQPKASHFINGEYVEDTDGTVIESLYPATGEVIARLHAATPAIVEKAIAAAKRAQPEWAAMSPMARGRILKRAADIMRERNRELSELETLDTGKPIQETIVADPTSGADAFEFFGGVAPAGLNGSHIPLGQDFAYTKRVPLGVCVGIGAWNYPQQIACWKGAPALISGNAMVFKPSENTPLGALKIAEILHEAGLPKGLFNVIQGDRDTGPLLVNHPDVAKVSLTGSVPTGRRVAAAAAGSLKHVTMELGGKSPLIVFDDADLDSAVGGAMLGNFYSTGQVCSNGTRVFVQKAVKAEFLKRLKARTEAMLIGDPLDEATQIGPMVSWAQREKVIAYIEKGKAEGATLVAGGGIPNNVSGEGYYVQPTVFADVTDDMTIAREEIFGPVMSVLDFDDEDEVITRANASEFGLSGGVFTADLSRAHRVVDRLEAGTLWINTYNLCPVEIPFGGSKQSGFGRENSLAALEHYSELKTVYVGMGPVAAPY.

K(+) is bound by residues Ser26 and Asp93. 150–152 (GAW) contacts NAD(+). The active-site Charge relay system is the Lys162. NAD(+) is bound by residues 176 to 179 (KPSE) and 229 to 232 (SVPT). Leu244 contributes to the K(+) binding site. Glu250 serves as the catalytic Proton acceptor. Positions 252, 284, and 384 each coordinate NAD(+). Cys284 functions as the Nucleophile in the catalytic mechanism. A Cysteine sulfenic acid (-SOH) modification is found at Cys284. Residues Lys454 and Gly457 each coordinate K(+). Glu461 (charge relay system) is an active-site residue.

It belongs to the aldehyde dehydrogenase family. As to quaternary structure, dimer of dimers. K(+) is required as a cofactor.

It catalyses the reaction betaine aldehyde + NAD(+) + H2O = glycine betaine + NADH + 2 H(+). The protein operates within amine and polyamine biosynthesis; betaine biosynthesis via choline pathway; betaine from betaine aldehyde: step 1/1. In terms of biological role, involved in the biosynthesis of the osmoprotectant glycine betaine. Catalyzes the irreversible oxidation of betaine aldehyde to the corresponding acid. This is Betaine aldehyde dehydrogenase from Rhizobium etli (strain ATCC 51251 / DSM 11541 / JCM 21823 / NBRC 15573 / CFN 42).